The chain runs to 241 residues: Translation initiation factor IF-3 (241 aa).

Positions 193 to 203 (AAEKARQKAIQ) are enriched in basic and acidic residues. Residues 193-241 (AAEKARQKAIQEGRAAPAQDDTEDEEIEKLERELEEQDDEDDDEAEATE) form a disordered region. Positions 212 to 241 (DDTEDEEIEKLERELEEQDDEDDDEAEATE) are enriched in acidic residues.

The protein belongs to the IF-3 family. In terms of assembly, monomer.

It is found in the cytoplasm. IF-3 binds to the 30S ribosomal subunit and shifts the equilibrium between 70S ribosomes and their 50S and 30S subunits in favor of the free subunits, thus enhancing the availability of 30S subunits on which protein synthesis initiation begins. The polypeptide is Translation initiation factor IF-3 (Sorangium cellulosum (strain So ce56) (Polyangium cellulosum (strain So ce56))).